Reading from the N-terminus, the 147-residue chain is Transcription antitermination protein NusB (147 aa).

It belongs to the NusB family.

Functionally, involved in transcription antitermination. Required for transcription of ribosomal RNA (rRNA) genes. Binds specifically to the boxA antiterminator sequence of the ribosomal RNA (rrn) operons. The polypeptide is Transcription antitermination protein NusB (Legionella pneumophila (strain Paris)).